Reading from the N-terminus, the 130-residue chain is Small ribosomal subunit protein uS8 (130 aa).

The protein belongs to the universal ribosomal protein uS8 family. In terms of assembly, part of the 30S ribosomal subunit. Contacts proteins S5 and S12.

In terms of biological role, one of the primary rRNA binding proteins, it binds directly to 16S rRNA central domain where it helps coordinate assembly of the platform of the 30S subunit. This chain is Small ribosomal subunit protein uS8, found in Salmonella arizonae (strain ATCC BAA-731 / CDC346-86 / RSK2980).